The primary structure comprises 353 residues: Photosystem II D2 protein (353 aa).

Position 2 is an N-acetylthreonine (Thr-2). Thr-2 carries the post-translational modification Phosphothreonine. Residues 41–61 (CAYFALGGWFTGTTFVTSWYT) traverse the membrane as a helical segment. Chlorophyll a is bound at residue His-118. The helical transmembrane segment at 125–141 (GFMLRQFELARSVQLRP) threads the bilayer. Pheophytin a is bound by residues Gln-130 and Asn-143. Residues 153 to 166 (VFVSVFLIYPLGQS) form a helical membrane-spanning segment. Position 198 (His-198) interacts with chlorophyll a. Residues 208-228 (AALLCAIHGATVENTLFEDGD) form a helical membrane-spanning segment. Positions 215 and 262 each coordinate a plastoquinone. His-215 contributes to the Fe cation binding site. His-269 contacts Fe cation. The helical transmembrane segment at 279–295 (GSWMSAIGVVGLALNLR) threads the bilayer.

The protein belongs to the reaction center PufL/M/PsbA/D family. In terms of assembly, PSII is composed of 1 copy each of membrane proteins PsbA, PsbB, PsbC, PsbD, PsbE, PsbF, PsbH, PsbI, PsbJ, PsbK, PsbL, PsbM, PsbT, PsbX, PsbY, PsbZ, Psb30/Ycf12, at least 3 peripheral proteins of the oxygen-evolving complex and a large number of cofactors. It forms dimeric complexes. The cofactor is The D1/D2 heterodimer binds P680, chlorophylls that are the primary electron donor of PSII, and subsequent electron acceptors. It shares a non-heme iron and each subunit binds pheophytin, quinone, additional chlorophylls, carotenoids and lipids. There is also a Cl(-1) ion associated with D1 and D2, which is required for oxygen evolution. The PSII complex binds additional chlorophylls, carotenoids and specific lipids..

It is found in the plastid. The protein resides in the chloroplast thylakoid membrane. The enzyme catalyses 2 a plastoquinone + 4 hnu + 2 H2O = 2 a plastoquinol + O2. In terms of biological role, photosystem II (PSII) is a light-driven water:plastoquinone oxidoreductase that uses light energy to abstract electrons from H(2)O, generating O(2) and a proton gradient subsequently used for ATP formation. It consists of a core antenna complex that captures photons, and an electron transfer chain that converts photonic excitation into a charge separation. The D1/D2 (PsbA/PsbD) reaction center heterodimer binds P680, the primary electron donor of PSII as well as several subsequent electron acceptors. D2 is needed for assembly of a stable PSII complex. The protein is Photosystem II D2 protein of Pinus koraiensis (Korean pine).